An 829-amino-acid chain; its full sequence is Ectonucleotide pyrophosphatase/phosphodiesterase C27A7.1 (829 aa).

Residues 54–74 form a helical; Signal-anchor for type II membrane protein membrane-spanning segment; it reads VIGIAVLLLAMVVIVVIVLLL. Threonine 224 serves as the catalytic Nucleophile. 8 N-linked (GlcNAc...) asparagine glycosylation sites follow: asparagine 296, asparagine 424, asparagine 514, asparagine 542, asparagine 582, asparagine 649, asparagine 733, and asparagine 748. A disulfide bridge links cysteine 439 with cysteine 782.

This sequence belongs to the nucleotide pyrophosphatase/phosphodiesterase family.

Its subcellular location is the membrane. Probable phosphodiesterase. The protein is Ectonucleotide pyrophosphatase/phosphodiesterase C27A7.1 of Caenorhabditis elegans.